A 637-amino-acid chain; its full sequence is Chloride intracellular channel protein 6 (637 aa).

Residues 1–400 are disordered; that stretch reads MAETAEPEGG…EASEEGDPGQ (400 aa). Residues 35–63 are compositionally biased toward low complexity; that stretch reads GPEASEGAAKAPSGEGAGAAAKAGATEEA. S39 is subject to Phosphoserine. Positions 126–137 are enriched in basic and acidic residues; sequence CELRGEAAREAE. Residues 138-152 are compositionally biased toward low complexity; sequence GQAAAPAAPGAQEEA. 15 tandem repeats follow at residues 155–160, 161–166, 167–172, 173–178, 179–184, 185–190, 191–196, 197–202, 203–208, 209–214, 215–220, 221–226, 227–232, 233–238, and 239–244. The segment at 155–244 is 15 X 6 AA tandem repeat of [GEA]-[DGR]-[SN]-[VIM]-D-[AT]; it reads GDSVDAEGSI…SVDAGGSMDA (90 aa). Residues 247–256 are compositionally biased toward gly residues; that stretch reads PAGGAHGAGG. Over residues 305–314 the composition is skewed to acidic residues; the sequence is GSEDAAGEDG. Positions 315–332 are enriched in basic and acidic residues; that stretch reads DQGRPQEETEQQAERQEP. Phosphoserine occurs at positions 348 and 393. A G-site motif is present at residues 420–423; the sequence is CPFS. The helical transmembrane segment at 422–442 threads the bilayer; sequence FSQRLFMILWLKGVIFNVTTV. The 172-residue stretch at 466–637 folds into the GST C-terminal domain; it reads DGDVKTDVNK…AYSDVAKRMK (172 aa).

Belongs to the chloride channel CLIC family. Monomer (soluble state). Interacts with dopamine receptors DRD2, DRD3 and DRD4. Phosphorylated. Expressed in brain, chorioretinal, lacrimal glands, submandibular glands, airway epithelium, kidney and gastric mucosa, where it is preferentially expressed in cells that secrete or transport water. In brain, it is highly expressed in choroid plexus. Not detected in pancreas, adrenal glands, heart, skeletal muscle, ileal mucosa, liver and lung.

The protein localises to the cytoplasm. It localises to the cell membrane. It carries out the reaction chloride(in) = chloride(out). With respect to regulation, channel activity is redox- and pH-regulated. Inhibited by IAA-94. Its function is as follows. In the soluble state, catalyzes glutaredoxin-like thiol disulfide exchange reactions with reduced glutathione as electron donor. Can insert into membranes and form voltage-dependent chloride-selective channels. The channel opens upon membrane depolarization at positive voltages and closes at negative membrane voltages. May play a critical role in water-secreting cells, possibly through the regulation of chloride ion transport. This is Chloride intracellular channel protein 6 (CLIC6) from Oryctolagus cuniculus (Rabbit).